We begin with the raw amino-acid sequence, 706 residues long: Phenylalanine--tRNA ligase beta subunit, chloroplastic (706 aa).

Residues 300–388 (KVLKPIVLNY…RLHGFNNFLT (89 aa)) enclose the B5 domain. Mg(2+)-binding residues include Asp366, Asp372, Glu375, and Glu376. The 94-residue stretch at 612–705 (SVYPKIVKDL…LELKVQAILR (94 aa)) folds into the FDX-ACB domain.

It belongs to the phenylalanyl-tRNA synthetase beta subunit family. Type 1 subfamily. As to quaternary structure, tetramer of two alpha and two beta subunits. Requires Mg(2+) as cofactor.

Its subcellular location is the plastid. It is found in the chloroplast. The enzyme catalyses tRNA(Phe) + L-phenylalanine + ATP = L-phenylalanyl-tRNA(Phe) + AMP + diphosphate + H(+). In Phaeodactylum tricornutum (strain CCAP 1055/1), this protein is Phenylalanine--tRNA ligase beta subunit, chloroplastic.